Here is a 427-residue protein sequence, read N- to C-terminus: Trigger factor (427 aa).

The region spanning 163–248 (GDTVVIDFVG…IHEVKAKEVP (86 aa)) is the PPIase FKBP-type domain.

Belongs to the FKBP-type PPIase family. Tig subfamily.

The protein resides in the cytoplasm. It carries out the reaction [protein]-peptidylproline (omega=180) = [protein]-peptidylproline (omega=0). Functionally, involved in protein export. Acts as a chaperone by maintaining the newly synthesized protein in an open conformation. Functions as a peptidyl-prolyl cis-trans isomerase. The sequence is that of Trigger factor from Streptococcus pneumoniae serotype 4 (strain ATCC BAA-334 / TIGR4).